The chain runs to 117 residues: Large ribosomal subunit protein bL20c (117 aa).

This sequence belongs to the bacterial ribosomal protein bL20 family.

The protein localises to the plastid. Its subcellular location is the chloroplast. In terms of biological role, binds directly to 23S ribosomal RNA and is necessary for the in vitro assembly process of the 50S ribosomal subunit. It is not involved in the protein synthesizing functions of that subunit. This Acorus calamus (Sweet flag) protein is Large ribosomal subunit protein bL20c.